A 398-amino-acid polypeptide reads, in one-letter code: Bombesin receptor subtype-3 (398 aa).

Topologically, residues 1-40 are extracellular; the sequence is MAQRQPHSPNQTLISITNDTESSSVVSNDNTNKGRSGDNS. Asparagine 10 and asparagine 18 each carry an N-linked (GlcNAc...) asparagine glycan. A helical transmembrane segment spans residues 41–62; it reads PGIEALCAIYITYAVIISVGIL. Over 63-81 the chain is Cytoplasmic; that stretch reads GNAILIKVFFKTKSMQTVP. A helical membrane pass occupies residues 82–102; it reads NIFITSLAFGDLLLLLTCVPV. At 103 to 120 the chain is on the extracellular side; sequence DATHYLAEGWLFGRIGCK. A disulfide bridge connects residues cysteine 119 and cysteine 202. A helical transmembrane segment spans residues 121-142; the sequence is VLSFIRLTSVGVSVFTLTILSA. At 143–162 the chain is on the cytoplasmic side; the sequence is DRYKAVVKPLERQPSNAILK. Residues 163–183 form a helical membrane-spanning segment; sequence TCIKAGCVWIVSMIFALPEAI. At 184-219 the chain is on the extracellular side; it reads FSNVYSFRDPNKNVTFESCTSYPVSKKLLQEIHSLL. Residues 220 to 240 traverse the membrane as a helical segment; sequence CFLVFYIIPLSIISVYYSLIA. Topologically, residues 241–271 are cytoplasmic; sequence RTLYKSTLNIPTEEQGHARKQIESRKRIART. Residues 272–292 form a helical membrane-spanning segment; the sequence is VLVLVALFALCWLPNHLLYLY. Residues 293-312 lie on the Extracellular side of the membrane; that stretch reads HSFTSQTYVDPSAMHFIFTI. The chain crosses the membrane as a helical span at residues 313-332; sequence FSRVLAFSNSCVNPFALYWL. Topologically, residues 333–398 are cytoplasmic; that stretch reads SKTFQKHFKA…CSVKQAEDRV (66 aa). Cysteine 346 carries the S-palmitoyl cysteine lipid modification.

It belongs to the G-protein coupled receptor 1 family. Interacts with C6orf89.

The protein localises to the cell membrane. Functionally, role in sperm cell division, maturation, or function. This receptor mediates its action by association with G proteins that activate a phosphatidylinositol-calcium second messenger system. The sequence is that of Bombesin receptor subtype-3 (BRS3) from Macaca mulatta (Rhesus macaque).